The primary structure comprises 187 residues: MNVVKRPLDISQLPDAGEVIVDAEGHVAGRLATYIAKALLERPNLRIVVVNAEKLVITGDEKMVIEWFKRKISEWRTHYNPEKAGPKVPRRPDRVFKRIVRGMLPKKSETGRSALKRLRVYMSIPIEIMQRKRLVLYEVPEAKLRLRPLLQYTTLEEVWRSIDPEAWEKWRRAVEVWGKKLKQVASG.

This sequence belongs to the universal ribosomal protein uL13 family. Part of the 50S ribosomal subunit.

Its function is as follows. This protein is one of the early assembly proteins of the 50S ribosomal subunit, although it is not seen to bind rRNA by itself. It is important during the early stages of 50S assembly. This chain is Large ribosomal subunit protein uL13, found in Pyrobaculum aerophilum (strain ATCC 51768 / DSM 7523 / JCM 9630 / CIP 104966 / NBRC 100827 / IM2).